Here is a 313-residue protein sequence, read N- to C-terminus: Methionyl-tRNA formyltransferase (313 aa).

111–114 (SLLP) contacts (6S)-5,6,7,8-tetrahydrofolate.

This sequence belongs to the Fmt family.

It carries out the reaction L-methionyl-tRNA(fMet) + (6R)-10-formyltetrahydrofolate = N-formyl-L-methionyl-tRNA(fMet) + (6S)-5,6,7,8-tetrahydrofolate + H(+). Functionally, attaches a formyl group to the free amino group of methionyl-tRNA(fMet). The formyl group appears to play a dual role in the initiator identity of N-formylmethionyl-tRNA by promoting its recognition by IF2 and preventing the misappropriation of this tRNA by the elongation apparatus. The protein is Methionyl-tRNA formyltransferase of Mesoplasma florum (strain ATCC 33453 / NBRC 100688 / NCTC 11704 / L1) (Acholeplasma florum).